Here is a 188-residue protein sequence, read N- to C-terminus: Elongation factor P-like protein (188 aa).

It belongs to the elongation factor P family.

This is Elongation factor P-like protein from Stenotrophomonas maltophilia (strain K279a).